The primary structure comprises 202 residues: Tumor necrosis factor alpha-induced protein 8-like protein 3 (202 aa).

The segment covering 1–10 (MDTDSGDLSE) has biased composition (acidic residues). Positions 1-24 (MDTDSGDLSEGELSPGPEQFSSKS) are disordered.

Belongs to the TNFAIP8 family.

Its subcellular location is the cytoplasm. The protein resides in the cell membrane. Functionally, may act as a lipid transfer protein. The protein is Tumor necrosis factor alpha-induced protein 8-like protein 3 (tnfaip8l3) of Xenopus laevis (African clawed frog).